The sequence spans 736 residues: Catalase-peroxidase (736 aa).

Residues 1–25 (MSENGKCPVTGKTSKPVAGGGTSNQ) are disordered. Residues 96–224 (WHSAGTYRMG…LAAVQMGLIY (129 aa)) constitute a cross-link (tryptophyl-tyrosyl-methioninium (Trp-Tyr) (with M-250)). Catalysis depends on His97, which acts as the Proton acceptor. The tryptophyl-tyrosyl-methioninium (Tyr-Met) (with W-96) cross-link spans 224-250 (YVNPEGPDGNPDPIASGKDVRETFARM). His265 is a heme b binding site. The tract at residues 294 to 313 (GWKSSHGRGKGGDTISSGIE) is disordered.

This sequence belongs to the peroxidase family. Peroxidase/catalase subfamily. Homodimer or homotetramer. Heme b serves as cofactor. Post-translationally, formation of the three residue Trp-Tyr-Met cross-link is important for the catalase, but not the peroxidase activity of the enzyme.

The catalysed reaction is H2O2 + AH2 = A + 2 H2O. It catalyses the reaction 2 H2O2 = O2 + 2 H2O. Functionally, bifunctional enzyme with both catalase and broad-spectrum peroxidase activity. This Desulfatibacillum aliphaticivorans protein is Catalase-peroxidase.